The primary structure comprises 406 residues: Putative cfxQ-like protein R730 (406 aa).

Positions 1–37 (MKRSHDSITRSINSDNDSETNMNSDNNNNNKPNQRKK) are disordered. The segment covering 13–32 (NSDNDSETNMNSDNNNNNKP) has biased composition (low complexity). An ATP-binding site is contributed by 173–180 (GPPGVGKS).

Belongs to the CbxX/CfxQ family.

The polypeptide is Putative cfxQ-like protein R730 (Acanthamoeba polyphaga mimivirus (APMV)).